Reading from the N-terminus, the 152-residue chain is Xanthine-guanine phosphoribosyltransferase (152 aa).

5-phospho-alpha-D-ribose 1-diphosphate is bound by residues 37–38 (RG), R69, and 88–96 (DDLVDTGGT). Position 69 (R69) interacts with GMP. Mg(2+) is bound at residue D89. Guanine is bound by residues D92 and I135. Residues D92 and I135 each coordinate xanthine. Residues 92–96 (DTGGT) and 134–135 (WI) contribute to the GMP site.

This sequence belongs to the purine/pyrimidine phosphoribosyltransferase family. XGPT subfamily. Homotetramer. Mg(2+) is required as a cofactor.

The protein localises to the cell inner membrane. The enzyme catalyses GMP + diphosphate = guanine + 5-phospho-alpha-D-ribose 1-diphosphate. The catalysed reaction is XMP + diphosphate = xanthine + 5-phospho-alpha-D-ribose 1-diphosphate. It catalyses the reaction IMP + diphosphate = hypoxanthine + 5-phospho-alpha-D-ribose 1-diphosphate. It functions in the pathway purine metabolism; GMP biosynthesis via salvage pathway; GMP from guanine: step 1/1. Its pathway is purine metabolism; XMP biosynthesis via salvage pathway; XMP from xanthine: step 1/1. In terms of biological role, purine salvage pathway enzyme that catalyzes the transfer of the ribosyl-5-phosphate group from 5-phospho-alpha-D-ribose 1-diphosphate (PRPP) to the N9 position of the 6-oxopurines guanine and xanthine to form the corresponding ribonucleotides GMP (guanosine 5'-monophosphate) and XMP (xanthosine 5'-monophosphate), with the release of PPi. To a lesser extent, also acts on hypoxanthine. This is Xanthine-guanine phosphoribosyltransferase from Edwardsiella ictaluri (strain 93-146).